Consider the following 325-residue polypeptide: Ribosomal RNA small subunit methyltransferase H (325 aa).

Residues 32–34, aspartate 52, phenylalanine 79, aspartate 100, and glutamine 107 each bind S-adenosyl-L-methionine; that span reads GGH.

It belongs to the methyltransferase superfamily. RsmH family.

The protein localises to the cytoplasm. The enzyme catalyses cytidine(1402) in 16S rRNA + S-adenosyl-L-methionine = N(4)-methylcytidine(1402) in 16S rRNA + S-adenosyl-L-homocysteine + H(+). Functionally, specifically methylates the N4 position of cytidine in position 1402 (C1402) of 16S rRNA. The protein is Ribosomal RNA small subunit methyltransferase H of Oceanobacillus iheyensis (strain DSM 14371 / CIP 107618 / JCM 11309 / KCTC 3954 / HTE831).